Consider the following 173-residue polypeptide: Ribosome maturation factor RimM (173 aa).

Positions 102–173 (EGEYYWSDLI…TMLVDWDPEF (72 aa)) constitute a PRC barrel domain.

This sequence belongs to the RimM family. In terms of assembly, binds ribosomal protein uS19.

It localises to the cytoplasm. Its function is as follows. An accessory protein needed during the final step in the assembly of 30S ribosomal subunit, possibly for assembly of the head region. Essential for efficient processing of 16S rRNA. May be needed both before and after RbfA during the maturation of 16S rRNA. It has affinity for free ribosomal 30S subunits but not for 70S ribosomes. The polypeptide is Ribosome maturation factor RimM (Methylobacillus flagellatus (strain ATCC 51484 / DSM 6875 / VKM B-1610 / KT)).